The following is a 622-amino-acid chain: Protein translocase subunit SecD (622 aa).

6 helical membrane passes run 6 to 26 (FKIG…YPTV), 460 to 480 (AGLR…IFYY), 485 to 505 (MIAD…LAAF), 512 to 532 (PGIA…VLIF), 559 to 579 (AIFD…SFGV), and 584 to 604 (GFAV…IVIT).

The protein belongs to the SecD/SecF family. SecD subfamily. As to quaternary structure, forms a complex with SecF. Part of the essential Sec protein translocation apparatus which comprises SecA, SecYEG and auxiliary proteins SecDF. Other proteins may also be involved.

The protein localises to the cell inner membrane. Functionally, part of the Sec protein translocase complex. Interacts with the SecYEG preprotein conducting channel. SecDF uses the proton motive force (PMF) to complete protein translocation after the ATP-dependent function of SecA. The protein is Protein translocase subunit SecD of Rhodothermus marinus (strain ATCC 43812 / DSM 4252 / R-10) (Rhodothermus obamensis).